A 278-amino-acid polypeptide reads, in one-letter code: Large ribosomal subunit protein uL2c (278 aa).

Positions 224–267 are disordered; the sequence is VVMNPVDHPHGGGEGRAPIGRKKPLTPWGHTALGGRSRKNHKYS.

The protein belongs to the universal ribosomal protein uL2 family. As to quaternary structure, part of the 50S ribosomal subunit.

Its subcellular location is the plastid. It is found in the chloroplast. This is Large ribosomal subunit protein uL2c (rpl2) from Huperzia lucidula (Shining clubmoss).